The following is a 59-amino-acid chain: Large ribosomal subunit protein uL30 (59 aa).

It belongs to the universal ribosomal protein uL30 family. Part of the 50S ribosomal subunit.

The sequence is that of Large ribosomal subunit protein uL30 from Persephonella marina (strain DSM 14350 / EX-H1).